We begin with the raw amino-acid sequence, 321 residues long: Glucokinase (321 aa).

Gly10–Thr15 provides a ligand contact to ATP.

It belongs to the bacterial glucokinase family.

The protein localises to the cytoplasm. It carries out the reaction D-glucose + ATP = D-glucose 6-phosphate + ADP + H(+). The chain is Glucokinase from Marinobacter nauticus (strain ATCC 700491 / DSM 11845 / VT8) (Marinobacter aquaeolei).